We begin with the raw amino-acid sequence, 342 residues long: Phosphate acyltransferase (342 aa).

This sequence belongs to the PlsX family. As to quaternary structure, homodimer. Probably interacts with PlsY.

It localises to the cytoplasm. It carries out the reaction a fatty acyl-[ACP] + phosphate = an acyl phosphate + holo-[ACP]. The protein operates within lipid metabolism; phospholipid metabolism. In terms of biological role, catalyzes the reversible formation of acyl-phosphate (acyl-PO(4)) from acyl-[acyl-carrier-protein] (acyl-ACP). This enzyme utilizes acyl-ACP as fatty acyl donor, but not acyl-CoA. The protein is Phosphate acyltransferase of Shewanella sediminis (strain HAW-EB3).